We begin with the raw amino-acid sequence, 357 residues long: Phosphoribosylformylglycinamidine cyclo-ligase (357 aa).

This sequence belongs to the AIR synthase family.

It is found in the cytoplasm. It carries out the reaction 2-formamido-N(1)-(5-O-phospho-beta-D-ribosyl)acetamidine + ATP = 5-amino-1-(5-phospho-beta-D-ribosyl)imidazole + ADP + phosphate + H(+). It participates in purine metabolism; IMP biosynthesis via de novo pathway; 5-amino-1-(5-phospho-D-ribosyl)imidazole from N(2)-formyl-N(1)-(5-phospho-D-ribosyl)glycinamide: step 2/2. In Rhizobium leguminosarum bv. trifolii (strain WSM2304), this protein is Phosphoribosylformylglycinamidine cyclo-ligase.